Here is an 86-residue protein sequence, read N- to C-terminus: YcgL domain-containing protein XC_4086 (86 aa).

Positions 1–83 (MHAYVYKSQR…PKTVVLAGEC (83 aa)) constitute a YcgL domain.

This is YcgL domain-containing protein XC_4086 from Xanthomonas campestris pv. campestris (strain 8004).